We begin with the raw amino-acid sequence, 1081 residues long: Serine/threonine-protein kinase PKH2 (1081 aa).

S138 bears the Phosphoserine mark. The region spanning 179–443 (FKFGSVIGDG…ISQIKEHHFF (265 aa)) is the Protein kinase domain. ATP is bound by residues 189–191 (AYS) and K208. Residues 210–255 (LNKEYLIRQKKVKYVSIEKTALQKLNNSPSVVRLFSTFQDESSLYF) are PIF-pocket. ATP-binding positions include 258-260 (EYA) and D264. Residue D303 is the Proton acceptor of the active site. ATP-binding residues include E307 and D321. Over residues 494 to 526 (HLVTQRSASSPSVEETTHSTLYNNNTHASTESE) the composition is skewed to polar residues. Disordered regions lie at residues 494–652 (HLVT…TYQM), 805–833 (NRSGEGYKCNQNSSPMKDDDKSESNNKGS), and 970–1017 (IERR…INSA). Basic and acidic residues predominate over residues 527 to 538 (ISIKKRPTDERT). 2 stretches are compositionally biased toward low complexity: residues 564–575 (AASAALAASAAL) and 582–602 (SYPTSSSKSSRSSSPATTSRP). At S619 the chain carries Phosphoserine. The span at 632-645 (PMPPYTPPMSPPMT) shows a compositional bias: pro residues. Composition is skewed to polar residues over residues 805 to 819 (NRSGEGYKCNQNSSP) and 998 to 1017 (HSQSPSISKHNSFSESINSA). At S1009 the chain carries Phosphoserine.

It belongs to the protein kinase superfamily. AGC Ser/Thr protein kinase family. PDPK1 subfamily.

The protein localises to the nucleus. Its subcellular location is the cytoplasm. It localises to the cell cortex. The catalysed reaction is L-seryl-[protein] + ATP = O-phospho-L-seryl-[protein] + ADP + H(+). The enzyme catalyses L-threonyl-[protein] + ATP = O-phospho-L-threonyl-[protein] + ADP + H(+). Sphingoid base activates kinase activity. Serine/threonine-protein kinase which is part sphingolipid-mediated signaling pathway that is required for the internalization step of endocytosis by regulating eisosome assembly and organization, and modulating the organization of the plasma membrane. Phosphorylates and activates PKC1. Activates YPK1 and YPK2, 2 components of signaling cascade required for maintenance of cell wall integrity. Required for stress-induced P-body assembly and regulates global mRNA decay at the deadenylation step. The chain is Serine/threonine-protein kinase PKH2 (PKH2) from Saccharomyces cerevisiae (strain ATCC 204508 / S288c) (Baker's yeast).